The following is a 280-amino-acid chain: 2,3,4,5-tetrahydropyridine-2,6-dicarboxylate N-succinyltransferase (280 aa).

The protein belongs to the transferase hexapeptide repeat family.

The protein resides in the cytoplasm. It catalyses the reaction (S)-2,3,4,5-tetrahydrodipicolinate + succinyl-CoA + H2O = (S)-2-succinylamino-6-oxoheptanedioate + CoA. Its pathway is amino-acid biosynthesis; L-lysine biosynthesis via DAP pathway; LL-2,6-diaminopimelate from (S)-tetrahydrodipicolinate (succinylase route): step 1/3. In Methylorubrum populi (strain ATCC BAA-705 / NCIMB 13946 / BJ001) (Methylobacterium populi), this protein is 2,3,4,5-tetrahydropyridine-2,6-dicarboxylate N-succinyltransferase.